We begin with the raw amino-acid sequence, 271 residues long: Troponin T, fast skeletal muscle (271 aa).

The segment covering 1–21 has biased composition (acidic residues); the sequence is MSDEEVEHVEEEYEEEEEAQE. A disordered region spans residues 1–74; it reads MSDEEVEHVE…EKVDFDDIQK (74 aa). Ser2 bears the N-acetylserine mark. At Ser2 the chain carries Phosphoserine. Composition is skewed to basic and acidic residues over residues 31 to 53 and 62 to 74; these read PEVH…EKPR and PEGE…DIQK. Ser90 carries the phosphoserine modification. Positions 113 to 155 are enriched in basic and acidic residues; the sequence is RAERAEQQRIRAEKERERQNRLAEEKARREEEDAKRRAEDDLK. Residues 113–194 are disordered; the sequence is RAERAEQQRI…REMKKKVLAE (82 aa). Phosphoserine occurs at positions 161, 168, and 169. Positions 183–194 are enriched in basic and acidic residues; it reads TAREMKKKVLAE. At Ser205 the chain carries Phosphoserine. A Phosphotyrosine modification is found at Tyr221. A disordered region spans residues 248–271; that stretch reads IDQAQKHSKKAGTAPKGKVGGRWK.

This sequence belongs to the troponin T family.

In terms of biological role, troponin T is the tropomyosin-binding subunit of troponin, the thin filament regulatory complex which confers calcium-sensitivity to striated muscle actomyosin ATPase activity. The protein is Troponin T, fast skeletal muscle (Tnnt3) of Bos taurus (Bovine).